A 23-amino-acid chain; its full sequence is Conotoxin as25a (23 aa).

Pro4 is modified (4-hydroxyproline; partial). Pro23 is subject to 4-hydroxyproline; partial; alternate. Position 23 is a proline amide; alternate (Pro23).

In terms of processing, the name as25b given in PubMed:23474143 corresponds to the hydroxylated peptide. The amidation of the C-terminus of this hydroxylated peptide is not directly confirmed. Contains 3 disulfide bonds. Expressed by the venom duct.

It is found in the secreted. Its function is as follows. Upon intracranial injection in mice, as25a (the toxin without the two 4-hydroxyprolines) provokes paralysis of the hind limbs and death with a dose of 240 pmol. The chain is Conotoxin as25a from Conus cancellatus (Cancellate cone).